Here is a 120-residue protein sequence, read N- to C-terminus: MSNVAYKSNLEPNRVHREAEQPKKQILKRGQMTLGEKVIITIALAIVLVVAFRIISVQAQIYTVNQEIQTKETKILEQQKSNEDLKVEVKDLGRYERILKIAKEKGLKLDGDNVKVVDGQ.

The tract at residues 1–22 (MSNVAYKSNLEPNRVHREAEQP) is disordered. Residues 1 to 37 (MSNVAYKSNLEPNRVHREAEQPKKQILKRGQMTLGEK) lie on the Cytoplasmic side of the membrane. A compositionally biased stretch (basic and acidic residues) spans 13-22 (NRVHREAEQP). A helical transmembrane segment spans residues 38 to 58 (VIITIALAIVLVVAFRIISVQ). The Extracellular segment spans residues 59–120 (AQIYTVNQEI…GDNVKVVDGQ (62 aa)).

This sequence belongs to the FtsL family.

It localises to the cell membrane. Its function is as follows. Essential cell division protein. This Listeria monocytogenes serovar 1/2a (strain ATCC BAA-679 / EGD-e) protein is Cell division protein FtsL.